A 756-amino-acid chain; its full sequence is Ribosomal RNA large subunit methyltransferase K/L (756 aa).

One can recognise a THUMP domain in the interval 46 to 157 (TAYRLCLWSR…RGEAILSLDL (112 aa)). The span at 395–409 (ERRTPEQRQAEREQA) shows a compositional bias: basic and acidic residues. The tract at residues 395–441 (ERRTPEQRQAEREQAAYDQTPNEPQERKFNKNGNPIKPTPAPAPVIE) is disordered.

The protein belongs to the methyltransferase superfamily. RlmKL family.

It localises to the cytoplasm. The catalysed reaction is guanosine(2445) in 23S rRNA + S-adenosyl-L-methionine = N(2)-methylguanosine(2445) in 23S rRNA + S-adenosyl-L-homocysteine + H(+). The enzyme catalyses guanosine(2069) in 23S rRNA + S-adenosyl-L-methionine = N(2)-methylguanosine(2069) in 23S rRNA + S-adenosyl-L-homocysteine + H(+). Specifically methylates the guanine in position 2445 (m2G2445) and the guanine in position 2069 (m7G2069) of 23S rRNA. In Pseudomonas fluorescens (strain Pf0-1), this protein is Ribosomal RNA large subunit methyltransferase K/L.